The primary structure comprises 271 residues: Shikimate dehydrogenase (NADP(+)) (271 aa).

Residues 16-18 (SRS) and Thr-63 contribute to the shikimate site. Catalysis depends on Lys-67, which acts as the Proton acceptor. Shikimate is bound by residues Asn-88 and Asp-104. NADP(+) contacts are provided by residues 128 to 132 (GAGGA), 152 to 157 (NRTASK), and Met-215. Tyr-217 provides a ligand contact to shikimate. Gly-238 serves as a coordination point for NADP(+).

This sequence belongs to the shikimate dehydrogenase family. Homodimer.

The catalysed reaction is shikimate + NADP(+) = 3-dehydroshikimate + NADPH + H(+). Its pathway is metabolic intermediate biosynthesis; chorismate biosynthesis; chorismate from D-erythrose 4-phosphate and phosphoenolpyruvate: step 4/7. In terms of biological role, involved in the biosynthesis of the chorismate, which leads to the biosynthesis of aromatic amino acids. Catalyzes the reversible NADPH linked reduction of 3-dehydroshikimate (DHSA) to yield shikimate (SA). In Chromohalobacter salexigens (strain ATCC BAA-138 / DSM 3043 / CIP 106854 / NCIMB 13768 / 1H11), this protein is Shikimate dehydrogenase (NADP(+)).